A 968-amino-acid polypeptide reads, in one-letter code: Alanine--tRNA ligase, cytoplasmic (968 aa).

Residue methionine 1 is modified to N-acetylmethionine. Phosphoserine occurs at positions 3 and 8. Lysine 19 is subject to N6-acetyllysine. ATP contacts are provided by residues arginine 77, histidine 95, tryptophan 176, and 214–216; that span reads IWN. L-alanine contacts are provided by asparagine 216 and aspartate 239. Position 243 (glycine 243) interacts with ATP. Serine 399 and serine 555 each carry phosphoserine. Zn(2+) contacts are provided by histidine 605, histidine 609, cysteine 723, and histidine 727. A Nuclear localization signal motif is present at residues 750–763; sequence RRIVAVTGAEAQKA. Lysine 876 is modified (N6-acetyllysine). Lysine 943 carries the post-translational modification N6,N6,N6-trimethyllysine; alternate. Lysine 943 carries the N6,N6-dimethyllysine; alternate modification. N6-methyllysine; alternate is present on lysine 943.

It belongs to the class-II aminoacyl-tRNA synthetase family. Monomer. Interacts with ANKRD16; the interaction is direct. The cofactor is Zn(2+). Post-translationally, ISGylated. Methylation at 'Lys-943' by METTL21C.

It localises to the cytoplasm. The protein resides in the nucleus. It carries out the reaction tRNA(Ala) + L-alanine + ATP = L-alanyl-tRNA(Ala) + AMP + diphosphate. It catalyses the reaction (S)-lactate + ATP + H(+) = (S)-lactoyl-AMP + diphosphate. The enzyme catalyses (S)-lactoyl-AMP + L-lysyl-[protein] = N(6)-[(S)-lactoyl]-L-lysyl-[protein] + AMP + 2 H(+). The protein lactyltransferase activity is inhibited by beta-alanine. Catalyzes the attachment of alanine to tRNA(Ala) in a two-step reaction: alanine is first activated by ATP to form Ala-AMP and then transferred to the acceptor end of tRNA(Ala). Also edits incorrectly charged tRNA(Ala) via its editing domain. In presence of high levels of lactate, also acts as a protein lactyltransferase that mediates lactylation of lysine residues in target proteins, such as TEAD1, TP53/p53 and YAP1. Protein lactylation takes place in a two-step reaction: lactate is first activated by ATP to form lactate-AMP and then transferred to lysine residues of target proteins. Acts as an inhibitor of TP53/p53 activity by catalyzing lactylation of TP53/p53. Acts as a positive regulator of the Hippo pathway by mediating lactylation of TEAD1 and YAP1. The chain is Alanine--tRNA ligase, cytoplasmic (AARS1) from Pongo abelii (Sumatran orangutan).